Here is a 437-residue protein sequence, read N- to C-terminus: ATP-dependent protease ATPase subunit HslU (437 aa).

ATP-binding positions include Val-18, 60-65 (GVGKTE), Asp-250, Glu-315, and Arg-387.

Belongs to the ClpX chaperone family. HslU subfamily. A double ring-shaped homohexamer of HslV is capped on each side by a ring-shaped HslU homohexamer. The assembly of the HslU/HslV complex is dependent on binding of ATP.

The protein resides in the cytoplasm. ATPase subunit of a proteasome-like degradation complex; this subunit has chaperone activity. The binding of ATP and its subsequent hydrolysis by HslU are essential for unfolding of protein substrates subsequently hydrolyzed by HslV. HslU recognizes the N-terminal part of its protein substrates and unfolds these before they are guided to HslV for hydrolysis. The protein is ATP-dependent protease ATPase subunit HslU of Desulfovibrio desulfuricans (strain ATCC 27774 / DSM 6949 / MB).